A 786-amino-acid polypeptide reads, in one-letter code: Pentatricopeptide repeat-containing protein 10, chloroplastic (786 aa).

The interval 1 to 71 is disordered; it reads MEATGRGLFP…HQTPTPPHSF (71 aa). A chloroplast-targeting transit peptide spans 1-95; the sequence is MEATGRGLFP…HPLPTLAAFL (95 aa). Residues 27–36 show a composition bias toward pro residues; it reads PAAPPPPSPS. Residues 37-50 show a composition bias toward low complexity; it reads SLPLDSLLLHLTAP. 18 PPR repeats span residues 137 to 167, 173 to 207, 208 to 243, 244 to 278, 279 to 313, 314 to 348, 349 to 383, 384 to 418, 419 to 453, 454 to 488, 489 to 523, 524 to 558, 560 to 594, 595 to 629, 630 to 664, 666 to 700, 701 to 735, and 736 to 770; these read DASA…TPLP, DVRA…GVAP, TLVT…GVEP, DGFT…GHAP, CVVT…GCQP, DAVT…GLLP, NAFT…GFVP, NVNT…GCTP, NRVT…GVEL, SRDT…GFTP, CITT…GFKP, NEQS…GAVF, SWVI…GYNP, DLVI…GLSP, DLIT…QTMK, DVVS…GMAP, CAVT…GLKP, and MELT…DLDF.

It belongs to the PPR family. P subfamily. Forms homodimers.

It is found in the plastid. Its subcellular location is the chloroplast stroma. Its function is as follows. Involved in chloroplast mRNA stability. Binds specifically to two intergenic RNA regions of similar sequence located in the chloroplast atpH 5'-UTR and psaJ 3'-UTR, and serves as a barrier to RNA decay. Binding to a specific site in the intergenic region of the chloroplast atpH is sufficient to block 5'-3' and 3'-5' exonucleases. Acts as a protein barrier to block mRNA degradation by exonucleases, and defines processed mRNA termini in chloroplasts. Remodels the structure of the atpH ribosome-binding site in a manner that can account for its ability to enhance translation. Stabilizes a RNA 3'-end downstream from psaI. Binds atpH RNA as a monomer. The chain is Pentatricopeptide repeat-containing protein 10, chloroplastic from Zea mays (Maize).